Reading from the N-terminus, the 330-residue chain is G-protein coupled receptor 74 (330 aa).

7 helical membrane-spanning segments follow: residues 50–70 (LIVV…NLWL), 85–105 (FILI…IFSI), 121–141 (MVVF…LCFD), 160–180 (WVFC…QKAL), 210–230 (VAVS…CIFY), 252–272 (MLLF…LSFI), and 295–315 (LPLL…IYIL). C117 and C195 form a disulfide bridge.

This sequence belongs to the G-protein coupled receptor 1 family.

It is found in the host membrane. The chain is G-protein coupled receptor 74 (74) from Equus caballus (Horse).